The following is a 202-amino-acid chain: MADPRVEEIVEEETPKQTVEDAGSDSESEAGEANIPAGAAVTIHSRNEKKARKAIGKLGLKHVPGITRVTLRRPKNILFVINQPDVYRSPSSNTWIIFGEAKIEDLNSQAQASAAQQLAAAEAAAGEHAGHDHEHDLGTKVPEAETKKEEEEDDGEPVDESGLEAKDIELVMAQANVSRKKAVKALRENDNDIVNSIMALSI.

Positions Met-1–Val-19 are enriched in basic and acidic residues. Residues Met-1–Val-41 are disordered. Positions Ser-45–Ala-110 constitute an NAC-A/B domain. Positions Gln-117 to Glu-127 are enriched in low complexity. The segment at Gln-117–Ala-165 is disordered. Over residues His-128–Glu-149 the composition is skewed to basic and acidic residues. Residues Glu-150–Gly-162 are compositionally biased toward acidic residues. Residues Leu-163–Ile-202 enclose the UBA domain.

The protein belongs to the NAC-alpha family. As to quaternary structure, part of the nascent polypeptide-associated complex (NAC), consisting of egd2 and egd1. NAC associates with ribosomes via egd1.

It is found in the cytoplasm. The protein localises to the nucleus. Its function is as follows. Component of the nascent polypeptide-associated complex (NAC), a dynamic component of the ribosomal exit tunnel, protecting the emerging polypeptides from interaction with other cytoplasmic proteins to ensure appropriate nascent protein targeting. The NAC complex also promotes mitochondrial protein import by enhancing productive ribosome interactions with the outer mitochondrial membrane and blocks the inappropriate interaction of ribosomes translating non-secretory nascent polypeptides with translocation sites in the membrane of the endoplasmic reticulum. Egd2 may also be involved in transcription regulation. This Aspergillus oryzae (strain ATCC 42149 / RIB 40) (Yellow koji mold) protein is Nascent polypeptide-associated complex subunit alpha (egd2).